The primary structure comprises 234 residues: MAKLTKRMSVIRDKVDATKQYDINEAISLLKELATAKFVESVDVAVNLGIDARKSDQNVRGATVLPHGTGRSVRVAVFAQGANAEAAKAAGAELVGMEDLADQIKKGEMNFDVVIASPDAMRVVGQLGQVLGPRGLMPNPKVGTVTPNVAEAVKNAKAGQVRYRNDKNGIIHTTIGKVDFDADKLKENLEALLVALKKAKPTQAKGVYIKKVSISTTMGAGVAVDQAGLNASAN.

Belongs to the universal ribosomal protein uL1 family. As to quaternary structure, part of the 50S ribosomal subunit.

Functionally, binds directly to 23S rRNA. The L1 stalk is quite mobile in the ribosome, and is involved in E site tRNA release. In terms of biological role, protein L1 is also a translational repressor protein, it controls the translation of the L11 operon by binding to its mRNA. In Klebsiella pneumoniae (strain 342), this protein is Large ribosomal subunit protein uL1.